The primary structure comprises 427 residues: Endothelin-1 receptor (427 aa).

The signal sequence occupies residues 1–20; it reads METLCLRASFWLALVGCVIS. Residues 21-80 lie on the Extracellular side of the membrane; it reads DNPERYSTNLSNHVDDFTTFRGTELSFLVTTHQPTNLVLPSNGSMHNYCPQQTKITSAFK. N-linked (GlcNAc...) asparagine glycosylation is found at Asn-29 and Asn-62. The helical transmembrane segment at 81 to 102 threads the bilayer; that stretch reads YINTVISCTIFIVGMVGNATLL. At 103–112 the chain is on the cytoplasmic side; sequence RIIYQNKCMR. A helical transmembrane segment spans residues 113-132; it reads NGPNALIASLALGDLIYVVI. The Extracellular portion of the chain corresponds to 133 to 159; that stretch reads DLPINVFKLLAGRWPFDHNDFGVFLCK. Cys-158 and Cys-239 are disulfide-bonded. The chain crosses the membrane as a helical span at residues 160-181; it reads LFPFLQKSSVGITVLNLCALSV. Residues 182–205 are Cytoplasmic-facing; that stretch reads DRYRAVASWSRVQGIGIPLVTAIE. The chain crosses the membrane as a helical span at residues 206-229; sequence IVSIWILSFILAIPEAIGFVMVPF. Topologically, residues 230-256 are extracellular; sequence EYRGEQHKTCMLNATSKFMEFYQDVKD. A helical membrane pass occupies residues 257–278; sequence WWLFGFYFCMPLVCTAIFYTLM. Over 279 to 306 the chain is Cytoplasmic; the sequence is TCEMLNRRNGSLRIALSEHLKQRREVAK. Residues 307 to 328 form a helical membrane-spanning segment; the sequence is TVFCLVVIFALCWFPLHLSRIL. Topologically, residues 329 to 347 are extracellular; that stretch reads KKTVYNEMDKNRCELLSFL. The helical transmembrane segment at 348-372 threads the bilayer; the sequence is LLMDYIGINLATMNSCINPIALYFV. Over 373 to 427 the chain is Cytoplasmic; it reads SKKFKNCFQSCLCCCCYQSKSLMTSVPMNGTSIQWKNHDQNNHNTDRSSHKDSMN. The disordered stretch occupies residues 406 to 427; the sequence is QWKNHDQNNHNTDRSSHKDSMN. Positions 408–427 are enriched in basic and acidic residues; it reads KNHDQNNHNTDRSSHKDSMN. Residue Ser-425 is modified to Phosphoserine.

It belongs to the G-protein coupled receptor 1 family. Endothelin receptor subfamily. EDNRA sub-subfamily. Interacts with HDAC7 and KAT5. In terms of tissue distribution, isoform 1, isoform 3 and isoform 4 are expressed in a variety of tissues, with highest levels in the aorta and cerebellum, followed by lung, atrium and cerebral cortex, lower levels in the placenta, kidney, adrenal gland, duodenum, colon, ventricle and liver but no expression in umbilical vein endothelial cells. Within the placenta, isoform 1, isoform 2, isoform 3 and isoform 4 are expressed in the villi and stem villi vessels.

The protein resides in the cell membrane. Its function is as follows. Receptor for endothelin-1. Mediates its action by association with G proteins that activate a phosphatidylinositol-calcium second messenger system. The rank order of binding affinities for ET-A is: ET1 &gt; ET2 &gt;&gt; ET3. The chain is Endothelin-1 receptor from Homo sapiens (Human).